Here is a 207-residue protein sequence, read N- to C-terminus: Probable GTP-binding protein EngB (207 aa).

The EngB-type G domain maps to 23–203; it reads GAPEVCFVGR…GAHIENWISP (181 aa). GTP contacts are provided by residues 31–38, 58–62, 83–86, 150–153, and 182–184; these read GRSNAGKS, GRTRL, DLPG, TKAD, and FSS. Positions 38 and 60 each coordinate Mg(2+).

Belongs to the TRAFAC class TrmE-Era-EngA-EngB-Septin-like GTPase superfamily. EngB GTPase family. Mg(2+) is required as a cofactor.

Its function is as follows. Necessary for normal cell division and for the maintenance of normal septation. The polypeptide is Probable GTP-binding protein EngB (Bordetella bronchiseptica (strain ATCC BAA-588 / NCTC 13252 / RB50) (Alcaligenes bronchisepticus)).